The sequence spans 70 residues: Turripeptide Gsg9.2 (70 aa).

Residues 1 to 20 (MKVYCLLLVLLVGLVSQAHG) form the signal peptide. Residues 21–70 (QLDKKCQMVCTMDYRPVCGSDGRTYPNKCTLTSTACMSQRSITVFHDGEC) form the Kazal-like domain. 3 disulfide bridges follow: Cys26-Cys56, Cys30-Cys49, and Cys38-Cys70.

This sequence belongs to the conopeptide P-like superfamily. As to expression, expressed by the venom duct.

It localises to the secreted. Acts as a neurotoxin by inhibiting an ion channel. May also act as a serine protease inhibitor, since it possess the kazal serine protease inhibitor signature. This is Turripeptide Gsg9.2 from Gemmula sogodensis (Gem-turris).